Here is a 548-residue protein sequence, read N- to C-terminus: Chaperonin GroEL (548 aa).

ATP-binding positions include 30–33, lysine 51, 87–91, glycine 415, and aspartate 495; these read TLGP and DGTTT.

It belongs to the chaperonin (HSP60) family. Forms a cylinder of 14 subunits composed of two heptameric rings stacked back-to-back. Interacts with the co-chaperonin GroES.

The protein localises to the cytoplasm. It catalyses the reaction ATP + H2O + a folded polypeptide = ADP + phosphate + an unfolded polypeptide.. In terms of biological role, together with its co-chaperonin GroES, plays an essential role in assisting protein folding. The GroEL-GroES system forms a nano-cage that allows encapsulation of the non-native substrate proteins and provides a physical environment optimized to promote and accelerate protein folding. This is Chaperonin GroEL from Idiomarina loihiensis (strain ATCC BAA-735 / DSM 15497 / L2-TR).